The following is a 338-amino-acid chain: Ketol-acid reductoisomerase (NADP(+)) (338 aa).

Residues 1–181 (MQVYYDKDCD…GGGRSGIIET (181 aa)) enclose the KARI N-terminal Rossmann domain. NADP(+)-binding positions include 24–27 (YGSQ), arginine 47, serine 50, serine 52, and 82–85 (DEFQ). Residue histidine 107 is part of the active site. Glycine 133 contacts NADP(+). In terms of domain architecture, KARI C-terminal knotted spans 182–327 (TFKDETETDL…GKLRAMMPWI (146 aa)). Aspartate 190, glutamate 194, glutamate 226, and glutamate 230 together coordinate Mg(2+). Residue serine 251 participates in substrate binding.

It belongs to the ketol-acid reductoisomerase family. Mg(2+) is required as a cofactor.

It carries out the reaction (2R)-2,3-dihydroxy-3-methylbutanoate + NADP(+) = (2S)-2-acetolactate + NADPH + H(+). The catalysed reaction is (2R,3R)-2,3-dihydroxy-3-methylpentanoate + NADP(+) = (S)-2-ethyl-2-hydroxy-3-oxobutanoate + NADPH + H(+). The protein operates within amino-acid biosynthesis; L-isoleucine biosynthesis; L-isoleucine from 2-oxobutanoate: step 2/4. Its pathway is amino-acid biosynthesis; L-valine biosynthesis; L-valine from pyruvate: step 2/4. In terms of biological role, involved in the biosynthesis of branched-chain amino acids (BCAA). Catalyzes an alkyl-migration followed by a ketol-acid reduction of (S)-2-acetolactate (S2AL) to yield (R)-2,3-dihydroxy-isovalerate. In the isomerase reaction, S2AL is rearranged via a Mg-dependent methyl migration to produce 3-hydroxy-3-methyl-2-ketobutyrate (HMKB). In the reductase reaction, this 2-ketoacid undergoes a metal-dependent reduction by NADPH to yield (R)-2,3-dihydroxy-isovalerate. This is Ketol-acid reductoisomerase (NADP(+)) from Saccharophagus degradans (strain 2-40 / ATCC 43961 / DSM 17024).